Consider the following 118-residue polypeptide: Heavy metal-associated isoprenylated plant protein 47 (118 aa).

One can recognise an HMA domain in the interval Met-1–Leu-67. Cys-115 carries the cysteine methyl ester modification. Cys-115 carries the S-farnesyl cysteine lipid modification. Residues Leu-116–Met-118 constitute a propeptide, removed in mature form.

It belongs to the HIPP family.

In terms of biological role, heavy-metal-binding protein. The polypeptide is Heavy metal-associated isoprenylated plant protein 47 (Arabidopsis thaliana (Mouse-ear cress)).